A 464-amino-acid polypeptide reads, in one-letter code: Antithrombin-III (464 aa).

The N-terminal stretch at 1–32 (MYSNVIGTVTSGKRKVYLLSLLLIGFWDCVTC) is a signal peptide. 2 disulfide bridges follow: C40-C160 and C53-C127. Position 63 is a phosphothreonine; by FAM20C (T63). S68 carries the phosphoserine; by FAM20C modification. A heparin-binding site is contributed by W81. N128 carries N-linked (GlcNAc...) asparagine glycosylation. A heparin-binding site is contributed by R161. N-linked (GlcNAc...) asparagine glycosylation occurs at N167. R177 lines the heparin pocket. Residue N187 is glycosylated (N-linked (GlcNAc...) (complex) asparagine). N224 carries N-linked (GlcNAc...) asparagine glycosylation. The cysteines at positions 279 and 462 are disulfide-linked.

Belongs to the serpin family. In terms of assembly, forms protease inhibiting heterodimer with TMPRSS7. Phosphorylated by FAM20C in the extracellular medium. As to expression, found in plasma.

The protein resides in the secreted. It localises to the extracellular space. Functionally, most important serine protease inhibitor in plasma that regulates the blood coagulation cascade. AT-III inhibits thrombin, matriptase-3/TMPRSS7, as well as factors IXa, Xa and XIa. Its inhibitory activity is greatly enhanced in the presence of heparin. The sequence is that of Antithrombin-III (SERPINC1) from Homo sapiens (Human).